A 292-amino-acid chain; its full sequence is AT-hook motif nuclear-localized protein 23 (292 aa).

The tract at residues 23 to 100 is disordered; that stretch reads HLHHNSSSDD…SKNKPKPPVI (78 aa). A compositionally biased stretch (gly residues) spans 60-79; sequence SGGGSGSSGGGGGHGGGGDV. A DNA-binding region (a.T hook) is located at residues 82-94; the sequence is RRPRGRPPGSKNK. The PPC domain maps to 106–242; sequence ANTLRAHILE…EDEQQQQLGG (137 aa).

It is found in the nucleus. Its function is as follows. Transcription factor that specifically binds AT-rich DNA sequences related to the nuclear matrix attachment regions (MARs). The chain is AT-hook motif nuclear-localized protein 23 from Arabidopsis thaliana (Mouse-ear cress).